The chain runs to 363 residues: DNA primase small subunit PriS (363 aa).

Catalysis depends on residues Asp-105, Asp-107, and Asp-265.

Belongs to the eukaryotic-type primase small subunit family. In terms of assembly, heterodimer of a small subunit (PriS) and a large subunit (PriL). Mg(2+) serves as cofactor. The cofactor is Mn(2+).

Its function is as follows. Catalytic subunit of DNA primase, an RNA polymerase that catalyzes the synthesis of short RNA molecules used as primers for DNA polymerase during DNA replication. The small subunit contains the primase catalytic core and has DNA synthesis activity on its own. Binding to the large subunit stabilizes and modulates the activity, increasing the rate of DNA synthesis while decreasing the length of the DNA fragments, and conferring RNA synthesis capability. The DNA polymerase activity may enable DNA primase to also catalyze primer extension after primer synthesis. May also play a role in DNA repair. The chain is DNA primase small subunit PriS from Methanococcus maripaludis (strain C7 / ATCC BAA-1331).